An 854-amino-acid chain; its full sequence is Alkaline phosphatase-like protein PglZ (854 aa).

Belongs to the alkaline phosphatase superfamily.

In terms of biological role, BREX systems (bacteriophage exclusion) provide immunity against bacteriophage. A core protein of a type 1 BREX system. This system allows phage adsorption but prevents phage DNA replication, without degradation of the phage DNA. Methylation of bacterial DNA by PglX probably guides self/non-self discrimination. When the brxA-brxB-brxC-pglX and pglZ-brxL operons are transformed into a susceptible B.subtilis strain (BEST7003) they confer resistance to bacteriophages SPbeta, SP16, Zeta, phi3T and SP02 and partial protection to phages SP01 and SP82G (these include lytic and temperate phage). They do not protect against phages phi105, rho10 or rho14. Additionally confers a very slight reduction in efficiency of plasmid transformation. The polypeptide is Alkaline phosphatase-like protein PglZ (Bacillus cereus (strain H3081.97)).